The sequence spans 131 residues: D-ribose pyranase (131 aa).

H20 functions as the Proton donor in the catalytic mechanism. Substrate contacts are provided by residues D28, H98, and 120–122 (FSN).

This sequence belongs to the RbsD / FucU family. RbsD subfamily. As to quaternary structure, homodecamer.

The protein resides in the cytoplasm. It catalyses the reaction beta-D-ribopyranose = beta-D-ribofuranose. The protein operates within carbohydrate metabolism; D-ribose degradation; D-ribose 5-phosphate from beta-D-ribopyranose: step 1/2. Functionally, catalyzes the interconversion of beta-pyran and beta-furan forms of D-ribose. This chain is D-ribose pyranase, found in Oenococcus oeni (strain ATCC BAA-331 / PSU-1).